The sequence spans 231 residues: Orotidine 5'-phosphate decarboxylase (231 aa).

Substrate-binding positions include aspartate 11, lysine 33, 60 to 69 (DLKFHDIPNT), threonine 120, arginine 181, glutamine 190, glycine 210, and arginine 211. Lysine 62 functions as the Proton donor in the catalytic mechanism.

Belongs to the OMP decarboxylase family. Type 1 subfamily. In terms of assembly, homodimer.

It catalyses the reaction orotidine 5'-phosphate + H(+) = UMP + CO2. The protein operates within pyrimidine metabolism; UMP biosynthesis via de novo pathway; UMP from orotate: step 2/2. In terms of biological role, catalyzes the decarboxylation of orotidine 5'-monophosphate (OMP) to uridine 5'-monophosphate (UMP). This is Orotidine 5'-phosphate decarboxylase from Vibrio atlanticus (strain LGP32) (Vibrio splendidus (strain Mel32)).